Consider the following 192-residue polypeptide: BREX protein BrxB (192 aa).

Belongs to the BrxB family.

In terms of biological role, BREX systems (bacteriophage exclusion) provide immunity against bacteriophage. Part of a type 1 BREX system. This system allows phage adsorption but prevents phage DNA replication, without degradation of the phage DNA. Methylation of bacterial DNA by PglX probably guides self/non-self discrimination. When the brxA-brxB-brxC-pglX and pglZ-brxL operons are transformed into a susceptible B.subtilis strain (BEST7003) they confer resistance to bacteriophages SPbeta, SP16, Zeta, phi3T and SP02 and partial protection to phages SP01 and SP82G (these include lytic and temperate phage). They do not protect against phages phi105, rho10 or rho14. Additionally confers a very slight reduction in efficiency of plasmid transformation. The sequence is that of BREX protein BrxB from Bacillus cereus (strain H3081.97).